Reading from the N-terminus, the 481-residue chain is Aspartyl/glutamyl-tRNA(Asn/Gln) amidotransferase subunit B (481 aa).

The protein belongs to the GatB/GatE family. GatB subfamily. In terms of assembly, heterotrimer of A, B and C subunits.

It catalyses the reaction L-glutamyl-tRNA(Gln) + L-glutamine + ATP + H2O = L-glutaminyl-tRNA(Gln) + L-glutamate + ADP + phosphate + H(+). The catalysed reaction is L-aspartyl-tRNA(Asn) + L-glutamine + ATP + H2O = L-asparaginyl-tRNA(Asn) + L-glutamate + ADP + phosphate + 2 H(+). Its function is as follows. Allows the formation of correctly charged Asn-tRNA(Asn) or Gln-tRNA(Gln) through the transamidation of misacylated Asp-tRNA(Asn) or Glu-tRNA(Gln) in organisms which lack either or both of asparaginyl-tRNA or glutaminyl-tRNA synthetases. The reaction takes place in the presence of glutamine and ATP through an activated phospho-Asp-tRNA(Asn) or phospho-Glu-tRNA(Gln). This Pseudomonas putida (strain ATCC 700007 / DSM 6899 / JCM 31910 / BCRC 17059 / LMG 24140 / F1) protein is Aspartyl/glutamyl-tRNA(Asn/Gln) amidotransferase subunit B.